The sequence spans 1112 residues: Cytosolic carboxypeptidase 4 (1112 aa).

A disordered region spans residues 291-345 (TTEPPHDLPEEDFEDDGDDEVDKDSDTEDGKVEDDDLETDVNKLSSKPGLDRPEE). The span at 299–329 (PEEDFEDDGDDEVDKDSDTEDGKVEDDDLET) shows a compositional bias: acidic residues. In terms of domain architecture, Peptidase M14 spans 732-1022 (YPYTYTALMT…HPVDGLQGLQ (291 aa)). Residues H804, E807, and H901 each contribute to the Zn(2+) site. Residue E986 is the Proton donor/acceptor of the active site.

It belongs to the peptidase M14 family. In terms of assembly, interacts with MYLK. Interacts with TCF4. Zn(2+) is required as a cofactor. As to expression, expressed in corneal endothelium.

It localises to the cytoplasm. The protein localises to the cytosol. The enzyme catalyses (L-glutamyl)(n+1)-gamma-L-glutamyl-L-glutamyl-[protein] + H2O = (L-glutamyl)(n)-gamma-L-glutamyl-L-glutamyl-[protein] + L-glutamate. The catalysed reaction is C-terminal L-alpha-aminoacyl-L-glutamyl-L-glutamyl-[tubulin] + H2O = C-terminal L-alpha-aminoacyl-L-glutamyl-[tubulin] + L-glutamate. Functionally, metallocarboxypeptidase that mediates deglutamylation of tubulin and non-tubulin target proteins. Catalyzes the removal of polyglutamate side chains present on the gamma-carboxyl group of glutamate residues within the C-terminal tail of tubulin protein. Specifically cleaves tubulin long-side-chains, while it is not able to remove the branching point glutamate. Also catalyzes the removal of polyglutamate residues from the carboxy-terminus of non-tubulin proteins such as MYLK. The chain is Cytosolic carboxypeptidase 4 from Homo sapiens (Human).